Here is a 356-residue protein sequence, read N- to C-terminus: S-adenosylmethionine:tRNA ribosyltransferase-isomerase (356 aa).

It belongs to the QueA family. In terms of assembly, monomer.

Its subcellular location is the cytoplasm. The catalysed reaction is 7-aminomethyl-7-carbaguanosine(34) in tRNA + S-adenosyl-L-methionine = epoxyqueuosine(34) in tRNA + adenine + L-methionine + 2 H(+). It participates in tRNA modification; tRNA-queuosine biosynthesis. In terms of biological role, transfers and isomerizes the ribose moiety from AdoMet to the 7-aminomethyl group of 7-deazaguanine (preQ1-tRNA) to give epoxyqueuosine (oQ-tRNA). The sequence is that of S-adenosylmethionine:tRNA ribosyltransferase-isomerase from Escherichia coli (strain 55989 / EAEC).